The primary structure comprises 164 residues: C-type lectin 1 (164 aa).

Positions 1-23 (MGRFLFASLGLLVVAFSLSGTGA) are cleaved as a signal peptide. 3 disulfides stabilise this stretch: Cys-27–Cys-38, Cys-55–Cys-154, and Cys-129–Cys-146. Positions 34-155 (YNVSCYKLFY…CTLLHPFLCQ (122 aa)) constitute a C-type lectin domain. N-linked (GlcNAc...) asparagine glycosylation is found at Asn-35 and Asn-109. A Mannose-binding motif is present at residues 119–121 (EPN). Ca(2+) contacts are provided by Glu-127, Asn-142, and Asp-143.

It belongs to the true venom lectin family. Expressed by the venom gland.

The protein resides in the secreted. Mannose-binding lectin which recognizes specific carbohydrate structures and agglutinates a variety of animal cells by binding to cell-surface glycoproteins and glycolipids. May be a calcium-dependent lectin. The chain is C-type lectin 1 from Hydrophis hardwickii (Hardwick's spine-bellied seasnake).